Consider the following 844-residue polypeptide: 3',5'-cyclic-AMP phosphodiesterase 4A (844 aa).

Residues 1-124 (MEPPAAPSER…RSPLDSQASP (124 aa)) are disordered. At serine 13 the chain carries Phosphoserine. The segment covering 36–46 (QPRTPIRIQQR) has biased composition (low complexity). The span at 51 to 78 (SAERSETERSPHRPIERADAVDTGDRPG) shows a compositional bias: basic and acidic residues. Positions 82–91 (TRMSWPSSFH) are enriched in polar residues. Serine 147 is modified (phosphoserine; by MAPKAPK2). Residues serine 152, serine 160, and serine 204 each carry the phosphoserine modification. Positions 296–317 (PSPTPRQRAFQQPPPSVLRQSQ) are disordered. Serine 333 carries the phosphoserine modification. One can recognise a PDEase domain in the interval 343–672 (VKTDQEDLLA…DWYHSAIRQS (330 aa)). Lysine 344 is covalently cross-linked (Glycyl lysine isopeptide (Lys-Gly) (interchain with G-Cter in SUMO)). The active-site Proton donor is histidine 419. Histidine 419 lines the 3',5'-cyclic AMP pocket. AMP contacts are provided by histidine 419 and histidine 423. Zn(2+) is bound by residues histidine 423, histidine 459, aspartate 460, and aspartate 577. Aspartate 460, aspartate 577, glutamine 628, and phenylalanine 631 together coordinate AMP. Aspartate 460 serves as a coordination point for Mg(2+). Aspartate 460 serves as a coordination point for Mn(2+). Residues glutamine 628 and phenylalanine 631 each coordinate 3',5'-cyclic AMP. 2 disordered regions span residues 668–690 (AIRQ…PSLP) and 818–844 (SACS…GDPA). Phosphoserine is present on residues serine 672 and serine 674. Over residues 820 to 830 (CSGTSGDNSAI) the composition is skewed to polar residues.

It belongs to the cyclic nucleotide phosphodiesterase family. PDE4 subfamily. As to quaternary structure, interacts with LYN (via SH3 domain). Interacts with ARRB2. Zn(2+) is required as a cofactor. The cofactor is Mg(2+). It depends on Mn(2+) as a cofactor. Post-translationally, phosphorylated by MAPKAPK2 at Ser-147; it counteracts PKA-induced activation of PDE4A and modulates intracellular cAMP levels. Likely involved in cellular desensitization to cAMP signaling. Proteolytically cleaved by CASP3. As to expression, isoform 2 is testis specific.

It localises to the cytoplasm. Its subcellular location is the cytosol. The protein localises to the membrane. It catalyses the reaction 3',5'-cyclic AMP + H2O = AMP + H(+). It functions in the pathway purine metabolism; 3',5'-cyclic AMP degradation; AMP from 3',5'-cyclic AMP: step 1/1. Inhibited by rolipram. Its function is as follows. Hydrolyzes the second messenger 3',5'-cyclic AMP (cAMP), which is a key regulator of many important physiological processes. Efficiently hydrolyzes cAMP. This chain is 3',5'-cyclic-AMP phosphodiesterase 4A (Pde4a), found in Rattus norvegicus (Rat).